A 426-amino-acid chain; its full sequence is C2H2 type master regulator of conidiophore development brlA (426 aa).

Disordered stretches follow at residues 25–71 and 281–302; these read CPSM…DRGT and GVRL…KQSL. The span at 30 to 44 shows a compositional bias: low complexity; the sequence is SSFSPLESPTPTPTS. Positions 45-58 are enriched in polar residues; it reads IYSQGSLASPSWPE. The segment covering 288–297 has biased composition (basic residues); the sequence is PSRKMARKQP. 2 C2H2-type zinc fingers span residues 316-340 and 346-371; these read FKCK…MKSH and HVCW…TKTH. The interval 384–426 is disordered; the sequence is LDETSPDYNPDYRGPLTADGRPMPGGTLDESMPSREISMEWDE.

The protein localises to the nucleus. In terms of biological role, brlA, abaA and wetA are pivotal regulators of conidiophore development and conidium maturation. They act individually and together to regulate their own expression and that of numerous other sporulation-specific genes. Binds promoters of target genes at brlA response elements (BREs) containing the conserved sequence 5'-(C/A)(A/G)AGGG(G/A)-3'. Positively regulates expression of the gliotoxin biosynthetic gene cluster in actively growing vegetative cells, and likely bridges morphological and chemical development during the life-cycle. Regulates (directly or indirectly) the ergot cluster genes. Positively regulates expression of the fumiquinazoline C biosynthetic gene cluster. Positively regulates expression of the melanin biosynthetic gene cluster. Mediates repression of ribosomal protein gene expression in response to nitrogen depletion. This is C2H2 type master regulator of conidiophore development brlA from Aspergillus fumigatus (strain ATCC MYA-4609 / CBS 101355 / FGSC A1100 / Af293) (Neosartorya fumigata).